A 482-amino-acid chain; its full sequence is Mannan endo-1,4-beta-mannosidase (482 aa).

The N-terminal stretch at 1–21 (MARTLRYLLCGILALAAGSNA) is a signal peptide. One can recognise a CBM6 domain in the interval 42-160 (TTYEAEDAIL…WYLVDSITLT (119 aa)). Residues asparagine 171 and asparagine 300 are each glycosylated (N-linked (GlcNAc...) asparagine). The GH26 domain maps to 181–474 (ASARALYDYL…YTSDYVLTLD (294 aa)). Glutamate 332 (proton donor) is an active-site residue. The active-site Nucleophile is glutamate 422.

It belongs to the glycosyl hydrolase 26 family.

The protein resides in the secreted. Its activity is regulated as follows. The activity is completely impaired by Ag(+), partially inhibited by Zn(2+), and enhanced by Co(2+), Ni(2+) and Cu(2+) by 22.6, 14.5 and 20.8 %, respectively. Ca(2+), Na(+), Mg(2+), Mn(2+), urea and EDTA do not significantly affect the mannanase activity. Mannan endo-1,4-beta-mannosidase that exhibits high activity against konjac glucomannan and carob galactomannan, as well as a lower activity toward beta-mannan. Shows no activity against barley beta-glucan, birchwood xylan, and low viscosity carboxymethyl cellulose (CMC). Has the ability to hydrolyze manno-oligosaccharides such as M4 which is degraded slightly to M3 and M1, M5 which is mainly degraded to M4 and M1, and M6 which is mostly hydrolyzed to M4 and M2. Shows no activity toward M2 and M3 manno-oligosaccharides. The chain is Mannan endo-1,4-beta-mannosidase from Thermothelomyces thermophilus (strain ATCC 42464 / BCRC 31852 / DSM 1799) (Sporotrichum thermophile).